The primary structure comprises 462 residues: Chitinase 1 (462 aa).

The signal sequence occupies residues M1 to A17. The GH18 domain maps to S18–S291. An N-linked (GlcNAc...) asparagine glycan is attached at N57. Residue E147 is the Proton donor of the active site.

It belongs to the glycosyl hydrolase 18 family. Chitinase class III subfamily.

It localises to the secreted. The catalysed reaction is Random endo-hydrolysis of N-acetyl-beta-D-glucosaminide (1-&gt;4)-beta-linkages in chitin and chitodextrins.. This is Chitinase 1 (CHT1) from Candida albicans (Yeast).